The primary structure comprises 141 residues: 16 kDa protein (141 aa).

The tract at residues 100-119 (TVKKSRNSKPSKKKFKERKE) is disordered. A compositionally biased stretch (basic residues) spans 102 to 115 (KKSRNSKPSKKKFK).

The protein is 16 kDa protein of Tobacco rattle virus (strain PLB).